Here is a 262-residue protein sequence, read N- to C-terminus: Small ribosomal subunit protein eS1 (262 aa).

A compositionally biased stretch (basic and acidic residues) spans 235–253 (HGDGKGSDEPGAKVSRPEA). Positions 235 to 262 (HGDGKGSDEPGAKVSRPEAYEPPVQESV) are disordered.

It belongs to the eukaryotic ribosomal protein eS1 family. In terms of assembly, component of the small ribosomal subunit. Mature ribosomes consist of a small (40S) and a large (60S) subunit. The 40S subunit contains about 33 different proteins and 1 molecule of RNA (18S). The 60S subunit contains about 49 different proteins and 3 molecules of RNA (28S, 5.8S and 5S).

The protein localises to the cytoplasm. The polypeptide is Small ribosomal subunit protein eS1 (Triatoma infestans (Assassin bug)).